A 138-amino-acid polypeptide reads, in one-letter code: Basic phospholipase A2 ammodytoxin A (138 aa).

The signal sequence occupies residues Met-1–Gly-16. 7 disulfide bridges follow: Cys-42–Cys-131, Cys-44–Cys-60, Cys-59–Cys-111, Cys-65–Cys-138, Cys-66–Cys-104, Cys-73–Cys-97, and Cys-91–Cys-102. Residues Tyr-43, Gly-45, and Gly-47 each coordinate Ca(2+). The active site involves His-63. Asp-64 contacts Ca(2+). Residue Asp-105 is part of the active site.

Belongs to the phospholipase A2 family. Group II subfamily. D49 sub-subfamily. In terms of assembly, monomer. Binds to calmodulin, coagulation factor X (F10), M-type PLA2 receptor (R-180). May also bind to 14-3-3 proteins gamma (YWHAG) and epsilon (YWHAE), and R25, a mitochondrial membrane protein. The cofactor is Ca(2+). In terms of tissue distribution, expressed by the venom gland.

It is found in the secreted. Its subcellular location is the host cytoplasm. It localises to the host cytosol. It catalyses the reaction a 1,2-diacyl-sn-glycero-3-phosphocholine + H2O = a 1-acyl-sn-glycero-3-phosphocholine + a fatty acid + H(+). Snake venom phospholipase A2 (PLA2) that acts as a presynaptic neurotoxin, an inhibitor of blood coagulation, and has been found to bind with high affinity to intracellular proteins. The response of indirectly stimulated neuromuscular preparations to ammodytoxin (Atx) is triphasic. The first phase, the transient inhibition of the acetylcholine (ACh) release, starts soon after the addition of Atx and lasts for several minutes. This phase is probably independent of Atx enzymatic activity. The effect may be due to the specific binding of the toxin to presynaptic receptors. These receptors, called N-type receptors, are still unidentified. It is noteworthy that a neuronal isoform of the M-type PLA2 receptor (R180) has been identified as a high-affinity receptor for Atx in neuronal plasma membranes. It was demonstrated however that this receptor is not essential for expression of neurotoxicity by Atx. The second phase corresponds to an augmentation of neurotransmitter release. A peak is reached 10-20 minutes after exposure of the preparation to Atx and is followed by a gradual reduction. In this phase, the enzymatic activity of Atx of the mammalian is not significant. It is speculated that the increased release of neurotransmitter in this phase is induced by the interference of Atx with voltage-gated potassium channels. Measurements of ionic currents showed however that voltage-gated potassium channels are not affected by Atx. The third phase of the response of neuromuscular preparations to Atx, which corresponds to a complete and irreversible paralysis, is clearly dependent on the hydrolytic activity of the toxin. In addition to its presynaptic neurotoxicity, Atx shows an anticoagulant activity by binding with high affinity to activated coagulation factor X (F10) thus inhibiting the formation of the prothrombinase complex (FX/FV) and its activity (IC(50) is 20 nM). Surprisingly, Atx was discovered to bind intracellular proteins such as calmodulin (CaM) (IC(50) is 6 nM), 14-3-3 proteins gamma (YWHAG) and epsilon (YWHAE) (by similarity with AtxC), as well as R25 (by similarity with AtxC), a mitochondrial integral membrane protein found in cerebral cortex. These findings raised a doubt about the dogma of the exclusively extracellular action of PLA2s, defended by the potential instability of these molecules in the reducing environment of the eukaryotic cytosol coupled with their possible inability to act as enzymes in this cellular compartment, due to too low concentration of calcium ions. This hypothesis was challenged efficiently by demonstrating the internalization of AtxA into a culture cells, but still remains to be directly demonstrated in vivo. PLA2 catalyzes the calcium-dependent hydrolysis of the 2-acyl groups in 3-sn-phosphoglycerides. This is Basic phospholipase A2 ammodytoxin A from Vipera ammodytes ammodytes (Western sand viper).